We begin with the raw amino-acid sequence, 76 residues long: Exodeoxyribonuclease 7 small subunit (76 aa).

Belongs to the XseB family. As to quaternary structure, heterooligomer composed of large and small subunits.

The protein resides in the cytoplasm. The catalysed reaction is Exonucleolytic cleavage in either 5'- to 3'- or 3'- to 5'-direction to yield nucleoside 5'-phosphates.. Its function is as follows. Bidirectionally degrades single-stranded DNA into large acid-insoluble oligonucleotides, which are then degraded further into small acid-soluble oligonucleotides. This chain is Exodeoxyribonuclease 7 small subunit, found in Gluconacetobacter diazotrophicus (strain ATCC 49037 / DSM 5601 / CCUG 37298 / CIP 103539 / LMG 7603 / PAl5).